The primary structure comprises 145 residues: Large-conductance mechanosensitive channel (145 aa).

Helical transmembrane passes span 14–34 (VMDL…VKSL), 38–58 (LIMP…YFLP), and 81–101 (GSFL…FLMV).

The protein belongs to the MscL family. As to quaternary structure, homopentamer.

Its subcellular location is the cell inner membrane. Functionally, channel that opens in response to stretch forces in the membrane lipid bilayer. May participate in the regulation of osmotic pressure changes within the cell. This is Large-conductance mechanosensitive channel from Rhizobium johnstonii (strain DSM 114642 / LMG 32736 / 3841) (Rhizobium leguminosarum bv. viciae).